Consider the following 64-residue polypeptide: Large ribosomal subunit protein bL35 (64 aa).

The span at 38-53 (KRKANLNAPKHVHHTN) shows a compositional bias: basic residues. Residues 38-64 (KRKANLNAPKHVHHTNAHSVMSLLCRA) form a disordered region.

This sequence belongs to the bacterial ribosomal protein bL35 family.

This chain is Large ribosomal subunit protein bL35, found in Helicobacter pylori (strain G27).